The sequence spans 439 residues: Acyl-coenzyme A thioesterase 9, mitochondrial (439 aa).

The N-terminal 21 residues, 1-21 (MKRAAIRLWTLNKGLLTHGRG), are a transit peptide targeting the mitochondrion. HotDog ACOT-type domains follow at residues 85 to 209 (SYIE…RDSE) and 289 to 401 (EDTK…EKEV). Lysine 102 carries the post-translational modification N6-acetyllysine.

This sequence belongs to the acyl coenzyme A hydrolase family. In terms of assembly, interacts with NYAP1, NYAP2 and MYO16. Widely expressed.

The protein resides in the mitochondrion. The protein localises to the mitochondrion matrix. It localises to the mitochondrion inner membrane. It catalyses the reaction butanoyl-CoA + H2O = butanoate + CoA + H(+). The enzyme catalyses propanoyl-CoA + H2O = propanoate + CoA + H(+). It carries out the reaction hexadecanoyl-CoA + H2O = hexadecanoate + CoA + H(+). The catalysed reaction is octanoyl-CoA + H2O = octanoate + CoA + H(+). It catalyses the reaction decanoyl-CoA + H2O = decanoate + CoA + H(+). The enzyme catalyses tetradecanoyl-CoA + H2O = tetradecanoate + CoA + H(+). It carries out the reaction 4,8-dimethylnonanoyl-CoA + H2O = 4,8-dimethylnonanoate + CoA + H(+). The catalysed reaction is 3-methylbutanoyl-CoA + H2O = 3-methylbutanoate + CoA + H(+). It catalyses the reaction 2-methylpropanoyl-CoA + H2O = 2-methylpropanoate + CoA + H(+). It functions in the pathway lipid metabolism; fatty acid metabolism. Its activity is regulated as follows. Strongly inhibited by NADH and CoA. Its function is as follows. Mitochondrial acyl-CoA thioesterase. Catalyzes the hydrolysis of acyl-CoAs into free fatty acids and coenzyme A (CoA), regulating their respective intracellular levels. Shows a clear preference for hydrophobic short-, medium-, and long-chain saturated acyl-CoAs with some activity also with short-chain dicarboxylic CoA esters. Regulates both mitochondrial lipid and amino acid metabolism. This Mus musculus (Mouse) protein is Acyl-coenzyme A thioesterase 9, mitochondrial (Acot9).